The primary structure comprises 54 residues: Large ribosomal subunit protein bL33C (54 aa).

This sequence belongs to the bacterial ribosomal protein bL33 family.

The chain is Large ribosomal subunit protein bL33C (rpmG3) from Streptomyces coelicolor (strain ATCC BAA-471 / A3(2) / M145).